We begin with the raw amino-acid sequence, 275 residues long: 2,3,4,5-tetrahydropyridine-2,6-dicarboxylate N-succinyltransferase (275 aa).

Substrate is bound by residues arginine 108 and aspartate 145.

It belongs to the transferase hexapeptide repeat family. Homotrimer.

The protein localises to the cytoplasm. The catalysed reaction is (S)-2,3,4,5-tetrahydrodipicolinate + succinyl-CoA + H2O = (S)-2-succinylamino-6-oxoheptanedioate + CoA. Its pathway is amino-acid biosynthesis; L-lysine biosynthesis via DAP pathway; LL-2,6-diaminopimelate from (S)-tetrahydrodipicolinate (succinylase route): step 1/3. The protein is 2,3,4,5-tetrahydropyridine-2,6-dicarboxylate N-succinyltransferase of Ruegeria pomeroyi (strain ATCC 700808 / DSM 15171 / DSS-3) (Silicibacter pomeroyi).